The chain runs to 552 residues: Membrane protein insertase YidC (552 aa).

Residues 3 to 23 (IKRTVLWVIFFMSAVMLFDNW) traverse the membrane as a helical segment. Residues 35 to 59 (PSATPTKTVGSAAPGTTTPGTQPAD) are disordered. Positions 42–59 (TVGSAAPGTTTPGTQPAD) are enriched in low complexity. A run of 3 helical transmembrane segments spans residues 364-384 (WGWS…PLSA), 430-450 (FGGC…YWVL), and 504-524 (MMFM…GLVL).

It belongs to the OXA1/ALB3/YidC family. Type 1 subfamily. In terms of assembly, interacts with the Sec translocase complex via SecD. Specifically interacts with transmembrane segments of nascent integral membrane proteins during membrane integration.

It is found in the cell inner membrane. Required for the insertion and/or proper folding and/or complex formation of integral membrane proteins into the membrane. Involved in integration of membrane proteins that insert both dependently and independently of the Sec translocase complex, as well as at least some lipoproteins. Aids folding of multispanning membrane proteins. The sequence is that of Membrane protein insertase YidC from Paraburkholderia phytofirmans (strain DSM 17436 / LMG 22146 / PsJN) (Burkholderia phytofirmans).